A 201-amino-acid chain; its full sequence is MYAYIRGKLTQLFPTHVVVESINGVGYEIQTPNSYRFQKYLEKELVIYTSLIVREDAQLLYGFINEEEKDMFLSLIKVTGIGPKSALAILATSTPNEVKMAIENENDAYLTKFPGIGKKTARQIVLDLKGKVQITRETTETLLSMNEENSNSENLVKEALLALEALGYSKREISKVEKVLNKSTFDSVDEAVKLGLKTLVS.

The segment at 1–64 is domain I; the sequence is MYAYIRGKLT…EDAQLLYGFI (64 aa). A domain II region spans residues 65-143; sequence NEEEKDMFLS…ITRETTETLL (79 aa). The flexible linker stretch occupies residues 144 to 150; the sequence is SMNEENS. Residues 151–201 form a domain III region; it reads NSENLVKEALLALEALGYSKREISKVEKVLNKSTFDSVDEAVKLGLKTLVS.

The protein belongs to the RuvA family. As to quaternary structure, homotetramer. Forms an RuvA(8)-RuvB(12)-Holliday junction (HJ) complex. HJ DNA is sandwiched between 2 RuvA tetramers; dsDNA enters through RuvA and exits via RuvB. An RuvB hexamer assembles on each DNA strand where it exits the tetramer. Each RuvB hexamer is contacted by two RuvA subunits (via domain III) on 2 adjacent RuvB subunits; this complex drives branch migration. In the full resolvosome a probable DNA-RuvA(4)-RuvB(12)-RuvC(2) complex forms which resolves the HJ.

It is found in the cytoplasm. Its function is as follows. The RuvA-RuvB-RuvC complex processes Holliday junction (HJ) DNA during genetic recombination and DNA repair, while the RuvA-RuvB complex plays an important role in the rescue of blocked DNA replication forks via replication fork reversal (RFR). RuvA specifically binds to HJ cruciform DNA, conferring on it an open structure. The RuvB hexamer acts as an ATP-dependent pump, pulling dsDNA into and through the RuvAB complex. HJ branch migration allows RuvC to scan DNA until it finds its consensus sequence, where it cleaves and resolves the cruciform DNA. In Staphylococcus haemolyticus (strain JCSC1435), this protein is Holliday junction branch migration complex subunit RuvA.